The primary structure comprises 338 residues: Ribosomal RNA small subunit methyltransferase H (338 aa).

Residues 53 to 55 (GGH), Asp-72, Tyr-99, Asp-123, and Gln-130 contribute to the S-adenosyl-L-methionine site. The segment at 277 to 298 (ITPRSKSKSPEGLPVELPGMGP) is disordered.

Belongs to the methyltransferase superfamily. RsmH family.

Its subcellular location is the cytoplasm. The enzyme catalyses cytidine(1402) in 16S rRNA + S-adenosyl-L-methionine = N(4)-methylcytidine(1402) in 16S rRNA + S-adenosyl-L-homocysteine + H(+). Specifically methylates the N4 position of cytidine in position 1402 (C1402) of 16S rRNA. This Rhodococcus opacus (strain B4) protein is Ribosomal RNA small subunit methyltransferase H.